Reading from the N-terminus, the 244-residue chain is Robin (244 aa).

The polypeptide is Robin (Acanthamoeba polyphaga (Amoeba)).